We begin with the raw amino-acid sequence, 233 residues long: Ion-translocating oxidoreductase complex subunit E (233 aa).

Transmembrane regions (helical) follow at residues 22-42 (LLGLCPLLAVTSTATNALGLG), 69-89 (IPIYVMIIAAVVSCVQMLINA), 93-113 (GLYQSLGIFIPLIVTNCIVVG), 128-148 (ALDGMAIGLGATSVMVVLGSI), and 182-202 (PMLLAMLPPGAFIGLGMLLAA).

It belongs to the NqrDE/RnfAE family. In terms of assembly, the complex is composed of six subunits: RnfA, RnfB, RnfC, RnfD, RnfE and RnfG.

The protein resides in the cell inner membrane. Functionally, part of a membrane-bound complex that couples electron transfer with translocation of ions across the membrane. This is Ion-translocating oxidoreductase complex subunit E from Erwinia tasmaniensis (strain DSM 17950 / CFBP 7177 / CIP 109463 / NCPPB 4357 / Et1/99).